The following is a 474-amino-acid chain: ATP synthase subunit beta (474 aa).

An ATP-binding site is contributed by 153 to 160 (GGAGVGKT).

This sequence belongs to the ATPase alpha/beta chains family. In terms of assembly, F-type ATPases have 2 components, CF(1) - the catalytic core - and CF(0) - the membrane proton channel. CF(1) has five subunits: alpha(3), beta(3), gamma(1), delta(1), epsilon(1). CF(0) has three main subunits: a(1), b(2) and c(9-12). The alpha and beta chains form an alternating ring which encloses part of the gamma chain. CF(1) is attached to CF(0) by a central stalk formed by the gamma and epsilon chains, while a peripheral stalk is formed by the delta and b chains.

It localises to the cell inner membrane. It carries out the reaction ATP + H2O + 4 H(+)(in) = ADP + phosphate + 5 H(+)(out). Functionally, produces ATP from ADP in the presence of a proton gradient across the membrane. The catalytic sites are hosted primarily by the beta subunits. This is ATP synthase subunit beta from Rickettsia prowazekii (strain Madrid E).